A 246-amino-acid polypeptide reads, in one-letter code: Homeobox protein SIX6 (246 aa).

The segment at residues 126 to 186 (WDGEQKTHCF…KNRRQRDRAA (61 aa)) is a DNA-binding region (homeobox). The segment at 190 to 246 (NRLQQQVLSQGPGRVLRSEGEGTPEVLGVASSPAASLSSKAATSAISITSSDSECDI) is disordered. Phosphothreonine is present on T212. Residues 219-246 (ASSPAASLSSKAATSAISITSSDSECDI) are compositionally biased toward low complexity. Phosphoserine occurs at positions 221, 225, 227, and 228.

It belongs to the SIX/Sine oculis homeobox family. Interacts with TLE4 and TLE5. As to expression, in the developing embryo, expressed mainly in the ventral optic stalk, optic chiasma, the neural retina and the primordial tissues that give rise to the pituitary/hypothalamus axis. Not expressed in the lens placode.

It localises to the nucleus. Its function is as follows. May be involved in eye development. The polypeptide is Homeobox protein SIX6 (Six6) (Mus musculus (Mouse)).